The primary structure comprises 502 residues: T-complex protein 11-like X-linked protein 1 (502 aa).

The interval 1-36 is disordered; it reads MPKTEETVLQNDPSVAENGAPEPKTPGQSQKSKSFC.

It belongs to the TCP11 family.

The polypeptide is T-complex protein 11-like X-linked protein 1 (Homo sapiens (Human)).